Consider the following 190-residue polypeptide: Elongation factor P-like protein (190 aa).

The protein belongs to the elongation factor P family.

The sequence is that of Elongation factor P-like protein from Psychromonas ingrahamii (strain DSM 17664 / CCUG 51855 / 37).